Reading from the N-terminus, the 302-residue chain is Sulfate adenylyltransferase subunit 2 (302 aa).

It belongs to the PAPS reductase family. CysD subfamily. As to quaternary structure, heterodimer composed of CysD, the smaller subunit, and CysN.

The catalysed reaction is sulfate + ATP + H(+) = adenosine 5'-phosphosulfate + diphosphate. It functions in the pathway sulfur metabolism; hydrogen sulfide biosynthesis; sulfite from sulfate: step 1/3. Functionally, with CysN forms the ATP sulfurylase (ATPS) that catalyzes the adenylation of sulfate producing adenosine 5'-phosphosulfate (APS) and diphosphate, the first enzymatic step in sulfur assimilation pathway. APS synthesis involves the formation of a high-energy phosphoric-sulfuric acid anhydride bond driven by GTP hydrolysis by CysN coupled to ATP hydrolysis by CysD. The protein is Sulfate adenylyltransferase subunit 2 of Escherichia coli O157:H7 (strain EC4115 / EHEC).